The chain runs to 309 residues: Non-homologous end-joining factor 1 (309 aa).

Residues 1 to 134 (MEAVLSALPW…TPVAVVCRQL (134 aa)) form a globular head region. The segment at 223–298 (GKTGRKRKHS…AGSEDRSTSR (76 aa)) is C-terminal tail. The disordered stretch occupies residues 223 to 309 (GKTGRKRKHS…KKKKAVGLFR (87 aa)). A compositionally biased stretch (basic and acidic residues) spans 243–252 (HITDHQHISE). Composition is skewed to polar residues over residues 253 to 265 (STDV…SQEH) and 273 to 290 (RSQV…STAG). Positions 297–309 (SRAKKKKAVGLFR) are enriched in basic residues. An XLM motif is present at residues 299-309 (AKKKKAVGLFR).

It belongs to the XRCC4-XLF family. XLF subfamily. Homodimer. Interacts with xrcc4; the interaction is direct and is mediated via a head-to-head interaction between N-terminal head regions. Component of the core long-range non-homologous end joining (NHEJ) complex (also named DNA-PK complex) composed of prkdc/DNA-PKcs, lig4, xrcc4, xrcc6/Ku70, xrcc5/Ku80 and nhej1/xlf.

The protein localises to the nucleus. It is found in the chromosome. Its function is as follows. DNA repair protein involved in DNA non-homologous end joining (NHEJ); it is required for double-strand break (DSB) repair and V(D)J recombination and is also involved in telomere maintenance. Plays a key role in NHEJ by promoting the ligation of various mismatched and non-cohesive ends. In some studies, has been shown to associate with xrcc4 to form alternating helical filaments that bridge DNA and act like a bandage, holding together the broken DNA until it is repaired. Alternatively, it has also been shown that rather than forming filaments, a single nhej1 dimer interacts through both head domains with xrcc4 to promote the close alignment of DNA ends. The xrcc4-nhej1/xlf subcomplex binds to the DNA fragments of a DSB in a highly diffusive manner and robustly bridges two independent DNA molecules, holding the broken DNA fragments in close proximity to one other. The mobility of the bridges ensures that the ends remain accessible for further processing by other repair factors. In Danio rerio (Zebrafish), this protein is Non-homologous end-joining factor 1 (nhej1).